Consider the following 349-residue polypeptide: Twinfilin-2-B (349 aa).

ADF-H domains follow at residues 4–139 (QTGI…KHVS) and 177–313 (GLSF…DEVH). The disordered stretch occupies residues 321–349 (QAFAKPKGPAGKRGQKRLIKGPGENGEDS).

It belongs to the actin-binding proteins ADF family. Twinfilin subfamily. In terms of assembly, interacts with G-actin; ADP-actin form and capping protein (CP).

It is found in the cytoplasm. The protein resides in the cytoskeleton. The protein localises to the perinuclear region. Actin-binding protein involved in motile and morphological processes. Inhibits actin polymerization, likely by sequestering G-actin. The chain is Twinfilin-2-B (twf2-b) from Xenopus laevis (African clawed frog).